Here is a 701-residue protein sequence, read N- to C-terminus: MAEEEPKIGVYICHCGENIAGAVNIEEVKKFAETLPNVVVVRDYLFMCSDPGQELIKQDIKEGRVNRVVVAACTPRTHEPIFRKACEDAGLNKYYFEMANIRDQCSWAHWHEKEKATEKAKQIIAAAVAKARLLEPLEDRYVDITQKVLVIGGGIAGIFAALDIANAGYKVYLVERNPSIGGNMAKLDKTFPTNDCSACILTPLMVEVANHPNIELLTYSEVEAVEGTVGNFKVKVRKKQTWVDWDLCTGCGACTDVCPPKARVPDEFNEGLSKRGAIYIQFPQAVPKKAVIDIDACIECGGRKFGTEPRKTKDGKPILAPCEKVCPTGAADRTKPRNPEGELIELDVGAIIVATGYKVMDKTHFKEFAPDSPNVITALQMERLISATGPTEGKLIVPSDIPKYEEWKKKVAKGEEVELEARKPHRIVYVSCVGSRDERFHTYCSKVCCMYMLKQAMLLKEKYPDLDIYIFFIDVRTPGKDFDEYYMRCRQLGIKVIKGKVGGIRRMPDERLWVRGYDAEIGKPVEVIADLVVLATAIEPSDGTIELARKLGINIGAEGFFRERHTKLYPVDTMTEGIFICGCAQGPKDIPDSVAQAKAAASSAMSLIAPGKMKLEPLVSEVDKEKCSGCGICVPLCPYGAITMTKYNESMRAEINPALCKGCGVCAAACPSKAIKLHGFTFEQVLAQVRTLAKRGIVEVL.

Position 152 to 175 (152 to 175) interacts with FAD; it reads GGGIAGIFAALDIANAGYKVYLVE. A 4Fe-4S ferredoxin-type 1 domain is found at 239–268; sequence KQTWVDWDLCTGCGACTDVCPPKARVPDEF. Residues Cys-248, Cys-251, Cys-254, Cys-326, Cys-627, Cys-630, Cys-633, Cys-637, Cys-660, Cys-663, Cys-666, and Cys-670 each coordinate [4Fe-4S] cluster. 4Fe-4S ferredoxin-type domains lie at 618–647 and 651–680; these read LVSE…MTKY and MRAE…LHGF.

It belongs to the HdrA family. The heterodisulfide reductase is composed of three subunits; HdlA, HdlB and HdlC. It forms a complex with the F420-non-reducing hydrogenase (Mvh), which provides the reducing equivalents to the heterodisulfide reductase. The cofactor is [4Fe-4S] cluster. Requires FAD as cofactor.

The protein resides in the cytoplasm. Its function is as follows. Has oxidoreductase activity. The Hdl and Mvh subunits may together mediate electron transfer from hydrogen to an unidentified electron acceptor on the cytoplasmic side of the membrane. The polypeptide is Heterodisulfide reductase subunit A-like protein (hdlA) (Archaeoglobus profundus (strain DSM 5631 / JCM 9629 / NBRC 100127 / Av18)).